The sequence spans 76 residues: Small ribosomal subunit protein bS18 (76 aa).

Belongs to the bacterial ribosomal protein bS18 family. As to quaternary structure, part of the 30S ribosomal subunit. Forms a tight heterodimer with protein bS6.

In terms of biological role, binds as a heterodimer with protein bS6 to the central domain of the 16S rRNA, where it helps stabilize the platform of the 30S subunit. This Oceanobacillus iheyensis (strain DSM 14371 / CIP 107618 / JCM 11309 / KCTC 3954 / HTE831) protein is Small ribosomal subunit protein bS18.